We begin with the raw amino-acid sequence, 509 residues long: Galactose-1-phosphate uridylyltransferase (509 aa).

Belongs to the galactose-1-phosphate uridylyltransferase type 2 family.

The protein localises to the cytoplasm. The enzyme catalyses alpha-D-galactose 1-phosphate + UDP-alpha-D-glucose = alpha-D-glucose 1-phosphate + UDP-alpha-D-galactose. It functions in the pathway carbohydrate metabolism; galactose metabolism. This chain is Galactose-1-phosphate uridylyltransferase, found in Fusobacterium nucleatum subsp. nucleatum (strain ATCC 25586 / DSM 15643 / BCRC 10681 / CIP 101130 / JCM 8532 / KCTC 2640 / LMG 13131 / VPI 4355).